Reading from the N-terminus, the 490-residue chain is Cytochrome P450 2C38 (490 aa).

The signal sequence occupies residues 1–20; that stretch reads MDLVTFLVLTLSSLILLSLW. C435 serves as a coordination point for heme.

This sequence belongs to the cytochrome P450 family. The cofactor is heme. Liver, brain, kidney, and intestine, with trace amounts in lung and heart.

It is found in the endoplasmic reticulum membrane. The protein localises to the microsome membrane. It catalyses the reaction an organic molecule + reduced [NADPH--hemoprotein reductase] + O2 = an alcohol + oxidized [NADPH--hemoprotein reductase] + H2O + H(+). The enzyme catalyses (5Z,8Z,11Z,14Z)-eicosatetraenoate + reduced [NADPH--hemoprotein reductase] + O2 = 11,12-epoxy-(5Z,8Z,14Z)-eicosatrienoate + oxidized [NADPH--hemoprotein reductase] + H2O + H(+). It functions in the pathway lipid metabolism; arachidonate metabolism. Functionally, a cytochrome P450 monooxygenase that primarily catalyzes the epoxidation of 11,12 double bond of (5Z,8Z,11Z,14Z)-eicosatetraenoic acid (arachidonate) forming 11,12-epoxyeicosatrienoic acid (11,12-EET) regioisomer. Mechanistically, uses molecular oxygen inserting one oxygen atom into a substrate, and reducing the second into a water molecule, with two electrons provided by NADPH via cytochrome P450 reductase (CPR; NADPH--hemoprotein reductase). In Mus musculus (Mouse), this protein is Cytochrome P450 2C38.